An 825-amino-acid polypeptide reads, in one-letter code: Probable inorganic carbon transporter subunit DabA (825 aa).

Residues Cys334, Asp336, His521, and Cys536 each contribute to the Zn(2+) site.

Belongs to the inorganic carbon transporter (TC 9.A.2) DabA family. Forms a complex with DabB. Zn(2+) is required as a cofactor.

It is found in the cell inner membrane. Part of an energy-coupled inorganic carbon pump. The sequence is that of Probable inorganic carbon transporter subunit DabA from Acidithiobacillus ferrooxidans (strain ATCC 53993 / BNL-5-31) (Leptospirillum ferrooxidans (ATCC 53993)).